The following is a 445-amino-acid chain: Tubby-like F-box protein 8 (445 aa).

The F-box domain occupies 56-102; sequence ESRWASLPPELLRDVIRRLEASESTWPSRKDVVSCAAVCKAWREMCK.

It belongs to the TUB family. As to expression, ubiquitous.

This chain is Tubby-like F-box protein 8 (TULP8), found in Oryza sativa subsp. japonica (Rice).